Reading from the N-terminus, the 724-residue chain is WD repeat-containing protein 91 (724 aa).

Residues 178-207 (FDSEVQRITSLQEDNEQLRQTVFALQGESR) are a coiled coil. The interval 249 to 365 (SRNFFSTFLP…PDQTDSANQT (117 aa)) is disordered. Polar residues-rich tracts occupy residues 270 to 279 (GPQSSPTQSA) and 303 to 315 (SVSSMTAELSTSH). S274 is modified (phosphoserine). The segment covering 322–333 (QDHEKERKELFS) has biased composition (basic and acidic residues). A compositionally biased stretch (polar residues) spans 349–365 (DTQTEAPPDQTDSANQT). 7 WD repeats span residues 389-428 (EHHSSIMHCRVDCSGRRVASLDVDGVVKVWAFNPIMQTKA), 431-471 (MSKS…CLYE), 499-532 (AHSGAVMESEPRGSAPVSGQLLLWDTKTVKQQLQ), 537-576 (PGPVAINCTAFNHNGNLLVTGAADGIIRLFDMQRYESALS), 579-618 (AHDGEVYSVEFSYDENTVFSIGEDGKFVQWNIHRCGVKQS), 641-679 (VQVPRGRLFAFDSEGQHVLTCSSTGGNIYRLNKAEAGLE), and 686-724 (GHKAPVVTVDWCSAMDCGTCLTASMDGKIKLSTLLAQKP).

This sequence belongs to the WD repeat WDR91 family.

The protein resides in the early endosome membrane. It is found in the late endosome membrane. Its function is as follows. Functions as a negative regulator of the PI3 kinase/PI3K activity associated with endosomal membranes. By modifying the phosphatidylinositol 3-phosphate/PtdInsP3 content of endosomal membranes may regulate endosome fusion, recycling, sorting and early to late endosome transport. In Danio rerio (Zebrafish), this protein is WD repeat-containing protein 91 (wdr91).